The chain runs to 176 residues: Large ribosomal subunit protein bL17 (176 aa).

The interval 124–176 (AAPKAARQDRSKRVKGSRKTEASAAKAAPAAQAAPELPAESDAPAAEAAPTEE) is disordered. Low complexity predominate over residues 145–176 (ASAAKAAPAAQAAPELPAESDAPAAEAAPTEE).

Belongs to the bacterial ribosomal protein bL17 family. In terms of assembly, part of the 50S ribosomal subunit. Contacts protein L32.

The protein is Large ribosomal subunit protein bL17 of Chlorobium phaeovibrioides (strain DSM 265 / 1930) (Prosthecochloris vibrioformis (strain DSM 265)).